An 876-amino-acid polypeptide reads, in one-letter code: Leucine--tRNA ligase (876 aa).

Positions 42 to 52 (PYPSGKLHMGH) match the 'HIGH' region motif. Residues 634–638 (KMGKS) carry the 'KMSKS' region motif. Residue K637 coordinates ATP.

The protein belongs to the class-I aminoacyl-tRNA synthetase family.

It localises to the cytoplasm. The catalysed reaction is tRNA(Leu) + L-leucine + ATP = L-leucyl-tRNA(Leu) + AMP + diphosphate. The chain is Leucine--tRNA ligase from Variovorax paradoxus (strain S110).